The primary structure comprises 451 residues: Trigger factor (451 aa).

In terms of domain architecture, PPIase FKBP-type spans 173–258 (GDRVTLDFVG…LKKIEWAHLP (86 aa)).

Belongs to the FKBP-type PPIase family. Tig subfamily.

It is found in the cytoplasm. The catalysed reaction is [protein]-peptidylproline (omega=180) = [protein]-peptidylproline (omega=0). In terms of biological role, involved in protein export. Acts as a chaperone by maintaining the newly synthesized protein in an open conformation. Functions as a peptidyl-prolyl cis-trans isomerase. This Cupriavidus pinatubonensis (strain JMP 134 / LMG 1197) (Cupriavidus necator (strain JMP 134)) protein is Trigger factor.